The following is a 1001-amino-acid chain: UPF0182 protein Mjls_1469 (1001 aa).

The next 7 helical transmembrane spans lie at 16–36 (VLIG…RFID), 61–81 (VVVF…GLAL), 112–132 (LFGF…AQSY), 174–194 (FVAT…FGGI), 209–229 (IQLV…YWLD), 258–278 (KLIL…AIVL), and 286–306 (IGVV…PLVV). Residues 900–929 (ATGPAPANLPDGQPAAQPPNGQQPAAQTPG) show a composition bias toward low complexity. The tract at residues 900–977 (ATGPAPANLP…MSGLQDAQRS (78 aa)) is disordered.

It belongs to the UPF0182 family.

The protein resides in the cell membrane. The polypeptide is UPF0182 protein Mjls_1469 (Mycobacterium sp. (strain JLS)).